The chain runs to 362 residues: Aminomethyltransferase (362 aa).

Belongs to the GcvT family. As to quaternary structure, the glycine cleavage system is composed of four proteins: P, T, L and H.

It carries out the reaction N(6)-[(R)-S(8)-aminomethyldihydrolipoyl]-L-lysyl-[protein] + (6S)-5,6,7,8-tetrahydrofolate = N(6)-[(R)-dihydrolipoyl]-L-lysyl-[protein] + (6R)-5,10-methylene-5,6,7,8-tetrahydrofolate + NH4(+). The glycine cleavage system catalyzes the degradation of glycine. This Listeria innocua serovar 6a (strain ATCC BAA-680 / CLIP 11262) protein is Aminomethyltransferase.